The primary structure comprises 241 residues: Fatty acid metabolism regulator protein (241 aa).

The region spanning 11 to 79 (QSPAALAEEY…HGKPTKVNNI (69 aa)) is the HTH gntR-type domain. A DNA-binding region (H-T-H motif) is located at residues 39-58 (ERDLADKIGVTRTTLREVLQ).

As to quaternary structure, homodimer.

The protein resides in the cytoplasm. Multifunctional regulator of fatty acid metabolism. The chain is Fatty acid metabolism regulator protein from Haemophilus influenzae (strain ATCC 51907 / DSM 11121 / KW20 / Rd).